The chain runs to 446 residues: D(1A) dopamine receptor (446 aa).

At 1-22 (MPLNDTTMDRRGLVVERDFSFR) the chain is on the extracellular side. The N-linked (GlcNAc...) asparagine glycan is linked to Asn4. Residues 23-48 (ILTACFLSLLILSTLLGNTLVCAAVI) traverse the membrane as a helical segment. Residues 49-59 (RFRHLRSKVTN) lie on the Cytoplasmic side of the membrane. A helical transmembrane segment spans residues 60-86 (FFVISLAVSDLLVAVLVMPWKAVAEIA). Residues 87 to 95 (GFWPFGSFC) lie on the Extracellular side of the membrane. Cys95 and Cys185 are joined by a disulfide. A helical transmembrane segment spans residues 96 to 118 (NIWVAFDIMCSTASILNLCVISV). Residues 119 to 137 (DRYWAISSPFRYERKMTPK) lie on the Cytoplasmic side of the membrane. Residues 138 to 162 (AAFILISVAWTLSVLISFIPVQLNW) traverse the membrane as a helical segment. The Extracellular segment spans residues 163 to 191 (HKARPLSSPDGNVSSQDETMDNCDSSLSR). The helical transmembrane segment at 192 to 217 (TYAISSSLISFYIPVAIMIVTYTRIY) threads the bilayer. Over 218–271 (RIAQKQIRRISALERAAVHAKNCQNTTGNGANVECSQPESSFKMSFKRETKVLK) the chain is Cytoplasmic. A helical transmembrane segment spans residues 272–298 (TLSVIMGVFVCCWLPFFILNCMVPFCE). Over 299–315 (SDLPSGETKPFCIDSIT) the chain is Extracellular. Residues 316 to 340 (FDVFVWFGWANSSLNPIIYAFNADF) form a helical membrane-spanning segment. Over 341-446 (RKAFSTLLGC…PITQNGQHKT (106 aa)) the chain is Cytoplasmic. S-palmitoyl cysteine attachment occurs at residues Cys350 and Cys354.

It belongs to the G-protein coupled receptor 1 family. In terms of assembly, interacts with DNAJC14 via its C-terminus.

The protein localises to the cell membrane. The protein resides in the endoplasmic reticulum membrane. It is found in the cell projection. It localises to the cilium membrane. Its subcellular location is the dendrite. The protein localises to the dendritic spine. In terms of biological role, this is one of the five types (D1 to D5) of receptors for dopamine. The activity of this receptor is mediated by G proteins which activate adenylyl cyclase. This Didelphis virginiana (North American opossum) protein is D(1A) dopamine receptor (DRD1).